Here is a 199-residue protein sequence, read N- to C-terminus: Dephospho-CoA kinase (199 aa).

One can recognise a DPCK domain in the interval 3 to 199 (KVGLTGGICS…DLLEFFTLYQ (197 aa)). ATP is bound at residue 11–16 (CSGKST).

It belongs to the CoaE family.

The protein localises to the cytoplasm. It carries out the reaction 3'-dephospho-CoA + ATP = ADP + CoA + H(+). The protein operates within cofactor biosynthesis; coenzyme A biosynthesis; CoA from (R)-pantothenate: step 5/5. Catalyzes the phosphorylation of the 3'-hydroxyl group of dephosphocoenzyme A to form coenzyme A. The chain is Dephospho-CoA kinase from Clostridium perfringens (strain 13 / Type A).